The sequence spans 288 residues: 4-hydroxy-tetrahydrodipicolinate synthase (288 aa).

T43 contacts pyruvate. Residue Y131 is the Proton donor/acceptor of the active site. The active-site Schiff-base intermediate with substrate is K160. I200 is a pyruvate binding site.

The protein belongs to the DapA family. Homotetramer; dimer of dimers.

The protein resides in the cytoplasm. It catalyses the reaction L-aspartate 4-semialdehyde + pyruvate = (2S,4S)-4-hydroxy-2,3,4,5-tetrahydrodipicolinate + H2O + H(+). It functions in the pathway amino-acid biosynthesis; L-lysine biosynthesis via DAP pathway; (S)-tetrahydrodipicolinate from L-aspartate: step 3/4. Functionally, catalyzes the condensation of (S)-aspartate-beta-semialdehyde [(S)-ASA] and pyruvate to 4-hydroxy-tetrahydrodipicolinate (HTPA). This is 4-hydroxy-tetrahydrodipicolinate synthase from Methanococcus aeolicus (strain ATCC BAA-1280 / DSM 17508 / OCM 812 / Nankai-3).